The sequence spans 297 residues: MDKQEAKHINMPSPSACEHKSVEAYLFIDPLCKDCWEIEPFIIKLWLEYGKYFSIRHIVTGKVDGTNASSHKWNKPANIRFVWEKTTSLQGFSCDGKVHMQEASSTPYLVSMAIKAAELQGRKAGSKFLRKLQEYIFLENVSNPDCELLLACAKDSNIDVEEFKKDLHSASAKKAFQCDLKFTNEMHITEIPSLVFFHANSDEEGIKIAGNYSYDVYVQLLKELVKCEIEPEPLPPLEVLLEATQFISSKEVAFIYDCPQQEIERELKKLQLKRKVQMIEVKCERYWKWIAKEKDLV.

Belongs to the SpxH family. Interacts with Spx.

It is found in the cytoplasm. Its function is as follows. Adapter protein required for efficient degradation of Spx by ClpXP under non-stress conditions. Interaction with Spx stabilizes Spx and exposes the C-terminus of Spx for recognition and proteolysis by ClpXP. In Bacillus cereus (strain ATCC 14579 / DSM 31 / CCUG 7414 / JCM 2152 / NBRC 15305 / NCIMB 9373 / NCTC 2599 / NRRL B-3711), this protein is ClpXP adapter protein SpxH.